Consider the following 145-residue polypeptide: Allergen MAG29 (145 aa).

Disordered regions lie at residues 1 to 21 and 103 to 145; these read KDDIERMVKEAESYKEEDDKQ and AGGA…EEVD. Residues 104 to 137 show a composition bias toward gly residues; that stretch reads GGAGAGGMPGGFPGGFPGTDGSGGGAAGGDGGKS.

It belongs to the heat shock protein 70 family.

The chain is Allergen MAG29 (MAG29) from Dermatophagoides farinae (American house dust mite).